The sequence spans 360 residues: Mitogen-activated protein kinase 14 (360 aa).

Ser2 bears the N-acetylserine mark. Ser2 bears the Phosphoserine mark. Thr16 carries the post-translational modification Phosphothreonine. In terms of domain architecture, Protein kinase spans 24–308 (YQNLSPVGSG…AAQALAHAYF (285 aa)). ATP is bound by residues 30–38 (VGSGAYGSV) and Lys53. At Lys53 the chain carries N6-acetyllysine. The Proton acceptor role is filled by Asp150. Lys152 is modified (N6-acetyllysine). The residue at position 180 (Thr180) is a Phosphothreonine; by MAP2K3, MAP2K4, MAP2K6 and autocatalysis. The TXY motif lies at 180–182 (TGY). Phosphotyrosine; by MAP2K3, MAP2K4, MAP2K6 and autocatalysis is present on Tyr182. Thr263 carries the phosphothreonine modification. Tyr323 bears the Phosphotyrosine; by ZAP70 mark.

This sequence belongs to the protein kinase superfamily. CMGC Ser/Thr protein kinase family. MAP kinase subfamily. In terms of assembly, component of a signaling complex containing at least AKAP13, PKN1, MAPK14, ZAK and MAP2K3. Within this complex, AKAP13 interacts directly with PKN1, which in turn recruits MAPK14, MAP2K3 and ZAK. Binds to a kinase interaction motif within the protein tyrosine phosphatase, PTPRR. This interaction retains MAPK14 in the cytoplasm and prevents nuclear accumulation. Interacts with SPAG9 and GADD45A. Interacts with CDC25B, CDC25C, DUSP1, DUSP10, DUSP16, NP60, SUPT20H and TAB1. Interacts with casein kinase II subunits CSNK2A1 and CSNK2B. Interacts with PPM1D. Interacts with CDK5RAP3; recruits PPM1D to MAPK14 and may regulate its dephosphorylation. Interacts with DUSP2; this interaction does not lead to catalytic activation of DUSP2 and dephosphrylation of MAPK14. The cofactor is Mg(2+). Post-translationally, dually phosphorylated on Thr-180 and Tyr-182 by the MAP2Ks MAP2K3/MKK3, MAP2K4/MKK4 and MAP2K6/MKK6 in response to inflammatory citokines, environmental stress or growth factors, which activates the enzyme. Dual phosphorylation can also be mediated by TAB1-mediated autophosphorylation. TCR engagement in T-cells also leads to Tyr-323 phosphorylation by ZAP70. Dephosphorylated and inactivated by DUPS1, DUSP10 and DUSP16. PPM1D also mediates dephosphorylation and inactivation of MAPK14. Acetylated at Lys-53 and Lys-152 by KAT2B and EP300. Acetylation at Lys-53 increases the affinity for ATP and enhances kinase activity. Lys-53 and Lys-152 are deacetylated by HDAC3. In terms of processing, ubiquitinated. Ubiquitination leads to degradation by the proteasome pathway.

It localises to the cytoplasm. The protein localises to the nucleus. The enzyme catalyses L-seryl-[protein] + ATP = O-phospho-L-seryl-[protein] + ADP + H(+). The catalysed reaction is L-threonyl-[protein] + ATP = O-phospho-L-threonyl-[protein] + ADP + H(+). Its activity is regulated as follows. Activated by cell stresses such as DNA damage, heat shock, osmotic shock, anisomycin and sodium arsenite, as well as pro-inflammatory stimuli such as bacterial lipopolysaccharide (LPS) and interleukin-1. Activation occurs through dual phosphorylation of Thr-180 and Tyr-182 by either of two dual specificity kinases, MAP2K3/MKK3 or MAP2K6/MKK6, and potentially also MAP2K4/MKK4, as well as by TAB1-mediated autophosphorylation. MAPK14 phosphorylated on both Thr-180 and Tyr-182 is 10-20-fold more active than MAPK14 phosphorylated only on Thr-180, whereas MAPK14 phosphorylated on Tyr-182 alone is inactive. whereas Thr-180 is necessary for catalysis, Tyr-182 may be required for auto-activation and substrate recognition. Phosphorylated at Tyr-323 by ZAP70 in an alternative activation pathway in response to TCR signaling in T-cells. This alternative pathway is inhibited by GADD45A. Inhibited by dual specificity phosphatases, such as DUSP1, DUSP10, and DUSP16. Specifically inhibited by the binding of pyridinyl-imidazole compounds, which are cytokine-suppressive anti-inflammatory drugs (CSAID). SB203580 is an inhibitor of MAPK14. Its function is as follows. Serine/threonine kinase which acts as an essential component of the MAP kinase signal transduction pathway. MAPK14 is one of the four p38 MAPKs which play an important role in the cascades of cellular responses evoked by extracellular stimuli such as pro-inflammatory cytokines or physical stress leading to direct activation of transcription factors. Accordingly, p38 MAPKs phosphorylate a broad range of proteins and it has been estimated that they may have approximately 200 to 300 substrates each. Some of the targets are downstream kinases which are activated through phosphorylation and further phosphorylate additional targets. RPS6KA5/MSK1 and RPS6KA4/MSK2 can directly phosphorylate and activate transcription factors such as CREB1, ATF1, the NF-kappa-B isoform RELA/NFKB3, STAT1 and STAT3, but can also phosphorylate histone H3 and the nucleosomal protein HMGN1. RPS6KA5/MSK1 and RPS6KA4/MSK2 play important roles in the rapid induction of immediate-early genes in response to stress or mitogenic stimuli, either by inducing chromatin remodeling or by recruiting the transcription machinery. On the other hand, two other kinase targets, MAPKAPK2/MK2 and MAPKAPK3/MK3, participate in the control of gene expression mostly at the post-transcriptional level, by phosphorylating ZFP36 (tristetraprolin) and ELAVL1, and by regulating EEF2K, which is important for the elongation of mRNA during translation. MKNK1/MNK1 and MKNK2/MNK2, two other kinases activated by p38 MAPKs, regulate protein synthesis by phosphorylating the initiation factor EIF4E2. MAPK14 also interacts with casein kinase II, leading to its activation through autophosphorylation and further phosphorylation of TP53/p53. In the cytoplasm, the p38 MAPK pathway is an important regulator of protein turnover. For example, CFLAR is an inhibitor of TNF-induced apoptosis whose proteasome-mediated degradation is regulated by p38 MAPK phosphorylation. In a similar way, MAPK14 phosphorylates the ubiquitin ligase SIAH2, regulating its activity towards EGLN3. MAPK14 may also inhibit the lysosomal degradation pathway of autophagy by interfering with the intracellular trafficking of the transmembrane protein ATG9. Another function of MAPK14 is to regulate the endocytosis of membrane receptors by different mechanisms that impinge on the small GTPase RAB5A. In addition, clathrin-mediated EGFR internalization induced by inflammatory cytokines and UV irradiation depends on MAPK14-mediated phosphorylation of EGFR itself as well as of RAB5A effectors. Ectodomain shedding of transmembrane proteins is regulated by p38 MAPKs as well. In response to inflammatory stimuli, p38 MAPKs phosphorylate the membrane-associated metalloprotease ADAM17. Such phosphorylation is required for ADAM17-mediated ectodomain shedding of TGF-alpha family ligands, which results in the activation of EGFR signaling and cell proliferation. Another p38 MAPK substrate is FGFR1. FGFR1 can be translocated from the extracellular space into the cytosol and nucleus of target cells, and regulates processes such as rRNA synthesis and cell growth. FGFR1 translocation requires p38 MAPK activation. In the nucleus, many transcription factors are phosphorylated and activated by p38 MAPKs in response to different stimuli. Classical examples include ATF1, ATF2, ATF6, ELK1, PTPRH, DDIT3, TP53/p53 and MEF2C and MEF2A. The p38 MAPKs are emerging as important modulators of gene expression by regulating chromatin modifiers and remodelers. The promoters of several genes involved in the inflammatory response, such as IL6, IL8 and IL12B, display a p38 MAPK-dependent enrichment of histone H3 phosphorylation on 'Ser-10' (H3S10ph) in LPS-stimulated myeloid cells. This phosphorylation enhances the accessibility of the cryptic NF-kappa-B-binding sites marking promoters for increased NF-kappa-B recruitment. Phosphorylates CDC25B and CDC25C which is required for binding to 14-3-3 proteins and leads to initiation of a G2 delay after ultraviolet radiation. Phosphorylates TIAR following DNA damage, releasing TIAR from GADD45A mRNA and preventing mRNA degradation. The p38 MAPKs may also have kinase-independent roles, which are thought to be due to the binding to targets in the absence of phosphorylation. Protein O-Glc-N-acylation catalyzed by the OGT is regulated by MAPK14, and, although OGT does not seem to be phosphorylated by MAPK14, their interaction increases upon MAPK14 activation induced by glucose deprivation. This interaction may regulate OGT activity by recruiting it to specific targets such as neurofilament H, stimulating its O-Glc-N-acylation. Required in mid-fetal development for the growth of embryo-derived blood vessels in the labyrinth layer of the placenta. Also plays an essential role in developmental and stress-induced erythropoiesis, through regulation of EPO gene expression. Phosphorylates S100A9 at 'Thr-113'. The polypeptide is Mitogen-activated protein kinase 14 (Canis lupus familiaris (Dog)).